The primary structure comprises 33 residues: Protamine-1B (33 aa).

The tract at residues 1 to 33 (PRRRRRRSSSRPIRRRRPRRVSRRRRRGGRRRR) is disordered.

As to expression, testis.

Its subcellular location is the nucleus. The protein resides in the chromosome. In terms of biological role, protamines substitute for histones in the chromatin of sperm during the haploid phase of spermatogenesis. They compact sperm DNA into a highly condensed, stable and inactive complex. This chain is Protamine-1B, found in Oncorhynchus mykiss (Rainbow trout).